The following is a 485-amino-acid chain: Cobyric acid synthase (485 aa).

The region spanning 249–437 is the GATase cobBQ-type domain; the sequence is HLKIRVPVWQ…WHGLFSQPSA (189 aa). C330 functions as the Nucleophile in the catalytic mechanism. The active site involves H429.

Belongs to the CobB/CobQ family. CobQ subfamily.

Its pathway is cofactor biosynthesis; adenosylcobalamin biosynthesis. In terms of biological role, catalyzes amidations at positions B, D, E, and G on adenosylcobyrinic A,C-diamide. NH(2) groups are provided by glutamine, and one molecule of ATP is hydrogenolyzed for each amidation. This Saccharophagus degradans (strain 2-40 / ATCC 43961 / DSM 17024) protein is Cobyric acid synthase.